The primary structure comprises 370 residues: D-alanine--D-alanine ligase (370 aa).

In terms of domain architecture, ATP-grasp spans 144 to 352 (KKIFADAGIP…YGALIERLVD (209 aa)). 177 to 232 (EEVLTYPVFVKPANLGSSVGISKATNKTELIEAMTEAFLYDRRVVVEQGVVAREIE) contributes to the ATP binding site. Mg(2+)-binding residues include Asp306, Glu319, and Asn321.

Belongs to the D-alanine--D-alanine ligase family. It depends on Mg(2+) as a cofactor. Mn(2+) is required as a cofactor.

It is found in the cytoplasm. The catalysed reaction is 2 D-alanine + ATP = D-alanyl-D-alanine + ADP + phosphate + H(+). It functions in the pathway cell wall biogenesis; peptidoglycan biosynthesis. Cell wall formation. The polypeptide is D-alanine--D-alanine ligase (Listeria innocua serovar 6a (strain ATCC BAA-680 / CLIP 11262)).